Here is a 147-residue protein sequence, read N- to C-terminus: Protein SprT-like (147 aa).

The 138-residue stretch at 5-142 (DYVNEVSLED…SFCRGHLKEI (138 aa)) folds into the SprT-like domain. Histidine 64 contributes to the Zn(2+) binding site. Glutamate 65 is a catalytic residue. Histidine 68 is a binding site for Zn(2+).

It belongs to the SprT family. The cofactor is Zn(2+).

It localises to the cytoplasm. The chain is Protein SprT-like from Streptococcus uberis (strain ATCC BAA-854 / 0140J).